We begin with the raw amino-acid sequence, 319 residues long: ATP-dependent 6-phosphofructokinase (319 aa).

Gly-11 serves as a coordination point for ATP. 21–25 (RAVVR) serves as a coordination point for ADP. ATP is bound by residues 72–73 (RC) and 102–105 (GDGS). Asp-103 contacts Mg(2+). 125–127 (TID) is a binding site for substrate. Catalysis depends on Asp-127, which acts as the Proton acceptor. Arg-154 contacts ADP. Substrate-binding positions include Arg-162 and 169–171 (MGR). Residues 185-187 (GAE), Arg-211, and 213-215 (KKH) each bind ADP. Residues Glu-222, Arg-243, and 249 to 252 (HIQR) each bind substrate.

The protein belongs to the phosphofructokinase type A (PFKA) family. ATP-dependent PFK group I subfamily. Prokaryotic clade 'B1' sub-subfamily. Homotetramer. Component of a possible RNA degradosome complex composed of rny, rnjA, rnjB, pnp, pfkA and eno (although rnjA and rnjB's presence is unclear). Specifically interacts with RNase Y (rny, PubMed:21803996) and enolase (eno, PubMed:22198292). Interacts with BrxC. Mg(2+) is required as a cofactor.

It localises to the cytoplasm. The catalysed reaction is beta-D-fructose 6-phosphate + ATP = beta-D-fructose 1,6-bisphosphate + ADP + H(+). It functions in the pathway carbohydrate degradation; glycolysis; D-glyceraldehyde 3-phosphate and glycerone phosphate from D-glucose: step 3/4. Its activity is regulated as follows. Allosterically activated by ADP and other diphosphonucleosides, and allosterically inhibited by phosphoenolpyruvate. Its function is as follows. Catalyzes the phosphorylation of D-fructose 6-phosphate to fructose 1,6-bisphosphate by ATP, the first committing step of glycolysis. This is ATP-dependent 6-phosphofructokinase from Bacillus subtilis (strain 168).